The following is a 98-amino-acid chain: Putative pterin-4-alpha-carbinolamine dehydratase (98 aa).

The protein belongs to the pterin-4-alpha-carbinolamine dehydratase family.

The catalysed reaction is (4aS,6R)-4a-hydroxy-L-erythro-5,6,7,8-tetrahydrobiopterin = (6R)-L-erythro-6,7-dihydrobiopterin + H2O. The protein is Putative pterin-4-alpha-carbinolamine dehydratase of Jannaschia sp. (strain CCS1).